A 149-amino-acid polypeptide reads, in one-letter code: MAEQLTEEQIAEFKEAFALFDKDGDGTITTKELGTVMRSLGQNPTEAELQDMINEVDADGNGTIDFPEFLSLMARKMKEQDSEEELIEAFKVFDRDGNGLISAAELRHVMTNLGEKLTDDEVDEMIREADIDGDGHINYEEFVRMMVSK.

Residue Ala-2 is modified to N-acetylalanine. EF-hand domains lie at 8 to 43 (EQIA…LGQN), 44 to 79 (PTEA…KMKE), 81 to 116 (DSEE…LGEK), and 117 to 149 (LTDD…MVSK). Lys-14 carries the N6,N6-dimethyllysine modification. Ca(2+) is bound by residues Asp-21, Asp-23, Asp-25, Thr-27, Glu-32, Asp-57, Asp-59, Asn-61, Thr-63, Glu-68, Asp-94, Asp-96, Asn-98, and Glu-105. Lys-116 is modified (N6,N6,N6-trimethyllysine). 5 residues coordinate Ca(2+): Asp-130, Asp-132, Asp-134, His-136, and Glu-141.

It belongs to the calmodulin family. The pantophobiac mutant CAM2 is undermethylated on Lys-116.

Functionally, calmodulin mediates the control of a large number of enzymes, ion channels and other proteins by Ca(2+). Among the enzymes to be stimulated by the calmodulin-Ca(2+) complex are a number of protein kinases and phosphatases. This Paramecium tetraurelia protein is Calmodulin (CAM).